Here is a 220-residue protein sequence, read N- to C-terminus: Peptide methionine sulfoxide reductase MsrA (220 aa).

C54 is a catalytic residue.

This sequence belongs to the MsrA Met sulfoxide reductase family.

The catalysed reaction is L-methionyl-[protein] + [thioredoxin]-disulfide + H2O = L-methionyl-(S)-S-oxide-[protein] + [thioredoxin]-dithiol. It carries out the reaction [thioredoxin]-disulfide + L-methionine + H2O = L-methionine (S)-S-oxide + [thioredoxin]-dithiol. Its function is as follows. Has an important function as a repair enzyme for proteins that have been inactivated by oxidation. Catalyzes the reversible oxidation-reduction of methionine sulfoxide in proteins to methionine. The protein is Peptide methionine sulfoxide reductase MsrA of Salinispora arenicola (strain CNS-205).